The primary structure comprises 241 residues: Carboxy-S-adenosyl-L-methionine synthase (241 aa).

S-adenosyl-L-methionine-binding positions include Tyr-38, 63-65 (GCS), 88-89 (DN), 116-117 (DI), Asn-131, and Arg-198.

The protein belongs to the class I-like SAM-binding methyltransferase superfamily. Cx-SAM synthase family. As to quaternary structure, homodimer.

The enzyme catalyses prephenate + S-adenosyl-L-methionine = carboxy-S-adenosyl-L-methionine + 3-phenylpyruvate + H2O. In terms of biological role, catalyzes the conversion of S-adenosyl-L-methionine (SAM) to carboxy-S-adenosyl-L-methionine (Cx-SAM). The protein is Carboxy-S-adenosyl-L-methionine synthase of Haemophilus influenzae (strain 86-028NP).